A 1396-amino-acid chain; its full sequence is uncharacterized protein (1396 aa).

88–95 (AYKKWGRS) is a binding site for ATP. Disordered stretches follow at residues 146 to 165 (EKIH…LSPT) and 198 to 388 (KPCS…VKDL). The span at 198–221 (KPCSYSSSSSSSTVPPASTDTSSP) shows a compositional bias: low complexity. Positions 242–268 (MHEKAQSRSRHEKESKLSSSTIEEKPA) are enriched in basic and acidic residues. The span at 286–300 (SWSSGSSEAGSSSSG) shows a compositional bias: low complexity. Residues 312 to 327 (VKVRHKAREIRNRKGR) show a composition bias toward basic residues. S817 and S1083 each carry phosphoserine. The disordered stretch occupies residues 1113–1137 (PISASELSPGGGSESEFESEKDEAS). Residues S1197 and S1339 each carry the phosphoserine modification. Residues 1347-1396 (TGERGSETKPNGLHRKMCSSASSDTGDTGSEAGGEWVGPSREELFSRTHL) form a disordered region. Over residues 1365 to 1376 (SSASSDTGDTGS) the composition is skewed to low complexity. Residues 1386–1396 (SREELFSRTHL) are compositionally biased toward basic and acidic residues.

This is an uncharacterized protein from Mus musculus (Mouse).